Here is a 274-residue protein sequence, read N- to C-terminus: 2,3,4,5-tetrahydropyridine-2,6-dicarboxylate N-succinyltransferase (274 aa).

Substrate-binding residues include Arg103 and Asp140.

This sequence belongs to the transferase hexapeptide repeat family. In terms of assembly, homotrimer.

The protein resides in the cytoplasm. It carries out the reaction (S)-2,3,4,5-tetrahydrodipicolinate + succinyl-CoA + H2O = (S)-2-succinylamino-6-oxoheptanedioate + CoA. Its pathway is amino-acid biosynthesis; L-lysine biosynthesis via DAP pathway; LL-2,6-diaminopimelate from (S)-tetrahydrodipicolinate (succinylase route): step 1/3. The sequence is that of 2,3,4,5-tetrahydropyridine-2,6-dicarboxylate N-succinyltransferase from Actinobacillus pleuropneumoniae serotype 5b (strain L20).